The primary structure comprises 156 residues: ATP synthase subunit b (156 aa).

Residues Ile-3–Thr-23 traverse the membrane as a helical segment.

Belongs to the ATPase B chain family. In terms of assembly, F-type ATPases have 2 components, F(1) - the catalytic core - and F(0) - the membrane proton channel. F(1) has five subunits: alpha(3), beta(3), gamma(1), delta(1), epsilon(1). F(0) has three main subunits: a(1), b(2) and c(10-14). The alpha and beta chains form an alternating ring which encloses part of the gamma chain. F(1) is attached to F(0) by a central stalk formed by the gamma and epsilon chains, while a peripheral stalk is formed by the delta and b chains.

Its subcellular location is the cell inner membrane. F(1)F(0) ATP synthase produces ATP from ADP in the presence of a proton or sodium gradient. F-type ATPases consist of two structural domains, F(1) containing the extramembraneous catalytic core and F(0) containing the membrane proton channel, linked together by a central stalk and a peripheral stalk. During catalysis, ATP synthesis in the catalytic domain of F(1) is coupled via a rotary mechanism of the central stalk subunits to proton translocation. Its function is as follows. Component of the F(0) channel, it forms part of the peripheral stalk, linking F(1) to F(0). This is ATP synthase subunit b from Xylella fastidiosa (strain M12).